A 329-amino-acid chain; its full sequence is Beta-ketoacyl-[acyl-carrier-protein] synthase III (329 aa).

Residues Cys113 and His256 contribute to the active site. The ACP-binding stretch occupies residues 257–261 (QANQR). Asn286 is a catalytic residue.

It belongs to the thiolase-like superfamily. FabH family. Homodimer.

The protein localises to the cytoplasm. It catalyses the reaction malonyl-[ACP] + acetyl-CoA + H(+) = 3-oxobutanoyl-[ACP] + CO2 + CoA. It functions in the pathway lipid metabolism; fatty acid biosynthesis. Functionally, catalyzes the condensation reaction of fatty acid synthesis by the addition to an acyl acceptor of two carbons from malonyl-ACP. Catalyzes the first condensation reaction which initiates fatty acid synthesis and may therefore play a role in governing the total rate of fatty acid production. Possesses both acetoacetyl-ACP synthase and acetyl transacylase activities. Its substrate specificity determines the biosynthesis of branched-chain and/or straight-chain of fatty acids. The protein is Beta-ketoacyl-[acyl-carrier-protein] synthase III of Natranaerobius thermophilus (strain ATCC BAA-1301 / DSM 18059 / JW/NM-WN-LF).